Reading from the N-terminus, the 361-residue chain is Porphobilinogen deaminase (361 aa).

N-acetylserine is present on S2. Phosphoserine is present on S69. An N6-acetyllysine modification is found at K74. Residue S147 is modified to Phosphoserine. C261 is modified (S-(dipyrrolylmethanemethyl)cysteine).

It belongs to the HMBS family. As to quaternary structure, monomer. Dipyrromethane is required as a cofactor.

Its subcellular location is the cytoplasm. It is found in the cytosol. The catalysed reaction is 4 porphobilinogen + H2O = hydroxymethylbilane + 4 NH4(+). It participates in porphyrin-containing compound metabolism; protoporphyrin-IX biosynthesis; coproporphyrinogen-III from 5-aminolevulinate: step 2/4. Its function is as follows. As part of the heme biosynthetic pathway, catalyzes the sequential polymerization of four molecules of porphobilinogen to form hydroxymethylbilane, also known as preuroporphyrinogen. Catalysis begins with the assembly of the dipyrromethane cofactor by the apoenzyme from two molecules of porphobilinogen or from preuroporphyrinogen. The covalently linked cofactor acts as a primer, around which the tetrapyrrole product is assembled. In the last step of catalysis, the product, preuroporphyrinogen, is released, leaving the cofactor bound to the holodeaminase intact. The sequence is that of Porphobilinogen deaminase (Hmbs) from Mus musculus (Mouse).